We begin with the raw amino-acid sequence, 296 residues long: GTPase Era (296 aa).

Positions 7–174 constitute an Era-type G domain; sequence KCSMSAIVGA…VDYLCETSPY (168 aa). A G1 region spans residues 15–22; the sequence is GATNAGKS. GTP is bound at residue 15 to 22; that stretch reads GATNAGKS. A G2 region spans residues 41-45; the sequence is QTTRV. The tract at residues 62–65 is G3; sequence DTPG. Residues 62 to 66 and 124 to 127 contribute to the GTP site; these read DTPGI and NKID. Residues 124-127 are G4; the sequence is NKID. A G5 region spans residues 153–155; it reads ISA. In terms of domain architecture, KH type-2 spans 205 to 282; it reads LRHELPYSLS…HLFLFVKVRE (78 aa).

Belongs to the TRAFAC class TrmE-Era-EngA-EngB-Septin-like GTPase superfamily. Era GTPase family. As to quaternary structure, monomer.

Its subcellular location is the cytoplasm. The protein resides in the cell inner membrane. An essential GTPase that binds both GDP and GTP, with rapid nucleotide exchange. Plays a role in 16S rRNA processing and 30S ribosomal subunit biogenesis and possibly also in cell cycle regulation and energy metabolism. The protein is GTPase Era of Ehrlichia ruminantium (strain Welgevonden).